Reading from the N-terminus, the 196-residue chain is S-norcoclaurine synthase 2 (196 aa).

Residues 1 to 19 form the signal peptide; sequence MRMEVVLVVFLMFIGTINC. 104–106 is a binding site for dopamine; it reads YRE. The active-site Proton donor is K118. D137 lines the (4-hydroxyphenyl)acetaldehyde pocket.

Belongs to the BetVI family.

The enzyme catalyses (4-hydroxyphenyl)acetaldehyde + dopamine = (S)-norcoclaurine + H2O. With respect to regulation, not inhibited by O-phenanthroline or EDTA. Involved in the biosynthesis of the common precursor of all benzylisoquinoline alkaloids such as morphine, sanguinarine, codeine or berberine. Condenses dopamine and pyruvic acid or 4-hydroxyphenylpyruvate. In Coptis japonica (Japanese goldthread), this protein is S-norcoclaurine synthase 2 (PR10A).